A 250-amino-acid polypeptide reads, in one-letter code: 2,3-bisphosphoglycerate-dependent phosphoglycerate mutase (250 aa).

Substrate is bound by residues 10 to 17 (RHGESQWN), 23 to 24 (TG), R62, 89 to 92 (ERHY), K100, 116 to 117 (RR), and 185 to 186 (GN). The active-site Tele-phosphohistidine intermediate is H11. E89 functions as the Proton donor/acceptor in the catalytic mechanism.

Belongs to the phosphoglycerate mutase family. BPG-dependent PGAM subfamily. As to quaternary structure, homodimer.

The enzyme catalyses (2R)-2-phosphoglycerate = (2R)-3-phosphoglycerate. Its pathway is carbohydrate degradation; glycolysis; pyruvate from D-glyceraldehyde 3-phosphate: step 3/5. Its function is as follows. Catalyzes the interconversion of 2-phosphoglycerate and 3-phosphoglycerate. In Erwinia tasmaniensis (strain DSM 17950 / CFBP 7177 / CIP 109463 / NCPPB 4357 / Et1/99), this protein is 2,3-bisphosphoglycerate-dependent phosphoglycerate mutase.